A 418-amino-acid polypeptide reads, in one-letter code: Putative ion-transport protein YfeO (418 aa).

The next 12 membrane-spanning stretches (helical) occupy residues 10-30, 54-74, 99-119, 120-140, 149-169, 186-206, 223-243, 258-278, 300-320, 322-342, 343-363, and 371-391; these read LLLSLPAVAIGIASSLILIMV, DSPLWIIGVLTLTGIAVGLVI, ALPGLIVALILGLAGGVSLGP, EHPIMTVNIALAVAIGARLLP, ILASAGTIGALFGTPVAAALI, LFAPLMAAAAGALTTGLFFHP, ILSGAIVAAIAIAAGMVAVWC, VFVLGIGGLILGILGVIGGPV, DYFLLAVIKLAALVVAAASGF, GGRIFPAVFVGVALGLMLHEH, VPAVPAAITVSCAILGIVLVV, and LFMAAVVVPNTTLLPLLCIVM.

This sequence belongs to the chloride channel (TC 2.A.49) family.

It localises to the cell membrane. In Escherichia coli O45:K1 (strain S88 / ExPEC), this protein is Putative ion-transport protein YfeO.